The chain runs to 933 residues: MLSTRAASADASDAKDAGTANIPNKRAILSRRKLAEDLETLVAEHGTGDKLRPALIARLRGALNDGRAEVRARFEAKGSGEDCVRQNCYLADGVVRSLADLTVTHIFPTPNPTSGEVFDIVATGGYGRGELAPFSDIDLLFLLPYKRTPRVEQVVEYMLYILWDLGLKVGHAVRSVDDCIRQSKADVTIRTAILESRYLWGPRKLFHRLRRRFDREVVAGTGPEFVEAKLAERDNRHLKLGDSAYVLEPNLKDGKGGLRDLQTLFWIAKYLYRVEDVDDLVGKKVLLPEEAHGFAKAQNFLWTARCHLHYLTGRMEDRMTFDVQTSIGNRMGYTDHAGTKGVERFMKHYFLVAKDVGDLTRIFCAALEAESKRPPKFNILRLAALARRKDVDGFVVDGERLNVRSDRQFKDEPLDMIRLFHTAQQNDIDIHPNALRAITRSLSVVGPKLRADPEANRLFLEILTGRKDPEITLRRMNEAGVLARFIPDFGRVVAQMQYDMYHVYTVDEHTLFALGILHKIEMGELTDELPLSSEVIHKVVSRRALYVAVLLHDIAKGRGGDHSILGARVAEKLCPRLGLTAEETETVAWLVRWHLAMSYTAFKRDLEDDKTVRDFVSLVQSPERLRLLLVLTVADIRAVGPQRWNNWKATLLRELYNRSEEVMSGGLSVEGRGRRIQAAQAALRDELSDFDAADFERHLALGYPAYWLAFDAETLGRQARLVRGRLRDERPLTVNTRIDRGRAITEVTIFATDHHGLFSRLAGALAAAGADIVDARIFTMTNGMALDVFTVQDAAGGGAFESGDKLAKLSVMIEKVLSGQLKPLHDLTKRKAPHASRTRVFHVPPRVLIDNNASTTHTVIEVNGRDRPGLLYDLTRALTNLTLQISSAKISTYGEKAIDVFYVKDVFGLKVTHENKLAQIRERLLHALADPSA.

The segment at 1 to 390 is uridylyltransferase; that stretch reads MLSTRAASAD…RLAALARRKD (390 aa). Positions 391 to 745 are uridylyl-removing; sequence VDGFVVDGER…TRIDRGRAIT (355 aa). An HD domain is found at 506 to 628; sequence VDEHTLFALG…VQSPERLRLL (123 aa). ACT domains lie at 746-829 and 859-933; these read EVTI…DLTK and VIEV…DPSA.

This sequence belongs to the GlnD family. It depends on Mg(2+) as a cofactor.

It catalyses the reaction [protein-PII]-L-tyrosine + UTP = [protein-PII]-uridylyl-L-tyrosine + diphosphate. It carries out the reaction [protein-PII]-uridylyl-L-tyrosine + H2O = [protein-PII]-L-tyrosine + UMP + H(+). Uridylyltransferase (UTase) activity is inhibited by glutamine, while glutamine activates uridylyl-removing (UR) activity. Uridylylation process is dependent on ATP and 2-oxoglutarate, which are effector molecules that likely bind to PII proteins and control their activity. Its function is as follows. Modifies, by uridylylation and deuridylylation, the PII regulatory proteins GlnB and GlnZ, in response to the nitrogen status of the cell that GlnD senses through the glutamine level. Under low glutamine levels, catalyzes the conversion of the PII proteins and UTP to PII-UMP and PPi, while under higher glutamine levels, GlnD hydrolyzes PII-UMP to PII and UMP (deuridylylation). Thus, controls uridylylation state and activity of the PII proteins, and plays an important role in the regulation of nitrogen fixation and metabolism. In Azospirillum brasilense, this protein is Bifunctional uridylyltransferase/uridylyl-removing enzyme.